We begin with the raw amino-acid sequence, 232 residues long: Enolase-phosphatase E1 (232 aa).

Belongs to the HAD-like hydrolase superfamily. MasA/MtnC family. As to quaternary structure, monomer. Mg(2+) is required as a cofactor.

It carries out the reaction 5-methylsulfanyl-2,3-dioxopentyl phosphate + H2O = 1,2-dihydroxy-5-(methylsulfanyl)pent-1-en-3-one + phosphate. It functions in the pathway amino-acid biosynthesis; L-methionine biosynthesis via salvage pathway; L-methionine from S-methyl-5-thio-alpha-D-ribose 1-phosphate: step 3/6. Its pathway is amino-acid biosynthesis; L-methionine biosynthesis via salvage pathway; L-methionine from S-methyl-5-thio-alpha-D-ribose 1-phosphate: step 4/6. In terms of biological role, bifunctional enzyme that catalyzes the enolization of 2,3-diketo-5-methylthiopentyl-1-phosphate (DK-MTP-1-P) into the intermediate 2-hydroxy-3-keto-5-methylthiopentenyl-1-phosphate (HK-MTPenyl-1-P), which is then dephosphorylated to form the acireductone 1,2-dihydroxy-3-keto-5-methylthiopentene (DHK-MTPene). The chain is Enolase-phosphatase E1 from Xanthomonas campestris pv. campestris (strain B100).